Reading from the N-terminus, the 73-residue chain is Large ribosomal subunit protein bL31 (73 aa).

It belongs to the bacterial ribosomal protein bL31 family. Type A subfamily. Part of the 50S ribosomal subunit.

Functionally, binds the 23S rRNA. The sequence is that of Large ribosomal subunit protein bL31 from Rhodospirillum centenum (strain ATCC 51521 / SW).